Here is a 209-residue protein sequence, read N- to C-terminus: Kynurenine formamidase (209 aa).

Residue Trp20 participates in substrate binding. Positions 50, 54, and 56 each coordinate Zn(2+). His60 (proton donor/acceptor) is an active-site residue. Zn(2+) is bound by residues His161 and Glu173.

This sequence belongs to the Cyclase 1 superfamily. KynB family. As to quaternary structure, homodimer. The cofactor is Zn(2+).

It carries out the reaction N-formyl-L-kynurenine + H2O = L-kynurenine + formate + H(+). The protein operates within amino-acid degradation; L-tryptophan degradation via kynurenine pathway; L-kynurenine from L-tryptophan: step 2/2. Catalyzes the hydrolysis of N-formyl-L-kynurenine to L-kynurenine, the second step in the kynurenine pathway of tryptophan degradation. This Bacillus cereus (strain ZK / E33L) protein is Kynurenine formamidase.